The primary structure comprises 49 residues: Feruloyl esterase A (49 aa).

It belongs to the AB hydrolase superfamily. FaeA family.

The protein localises to the secreted. The enzyme catalyses feruloyl-polysaccharide + H2O = ferulate + polysaccharide.. In terms of biological role, involved in degradation of plant cell walls. Hydrolyzes the feruloyl-arabinose ester bond in arabinoxylans as well as the feruloyl-galactose and feruloyl-arabinose ester bonds in pectin. Active against methyl esters of sinapate (MSA), but not caffeate (MCA). This chain is Feruloyl esterase A, found in Talaromyces stipitatus (strain ATCC 10500 / CBS 375.48 / QM 6759 / NRRL 1006) (Penicillium stipitatum).